Reading from the N-terminus, the 202-residue chain is Ion-translocating oxidoreductase complex subunit G (202 aa).

The chain crosses the membrane as a helical span at residues 11-31 (ACLMGFFSFFSLSSVIFVKNI). T176 is subject to FMN phosphoryl threonine.

It belongs to the RnfG family. The complex is composed of six subunits: RnfA, RnfB, RnfC, RnfD, RnfE and RnfG. FMN is required as a cofactor.

It localises to the cell inner membrane. Part of a membrane-bound complex that couples electron transfer with translocation of ions across the membrane. In Buchnera aphidicola subsp. Schizaphis graminum (strain Sg), this protein is Ion-translocating oxidoreductase complex subunit G.